Here is an 82-residue protein sequence, read N- to C-terminus: Small ribosomal subunit protein bS16 (82 aa).

It belongs to the bacterial ribosomal protein bS16 family.

This is Small ribosomal subunit protein bS16 from Elusimicrobium minutum (strain Pei191).